Here is a 313-residue protein sequence, read N- to C-terminus: Methionyl-tRNA formyltransferase (313 aa).

Residue 113 to 116 (SLLP) participates in (6S)-5,6,7,8-tetrahydrofolate binding.

Belongs to the Fmt family.

The enzyme catalyses L-methionyl-tRNA(fMet) + (6R)-10-formyltetrahydrofolate = N-formyl-L-methionyl-tRNA(fMet) + (6S)-5,6,7,8-tetrahydrofolate + H(+). Attaches a formyl group to the free amino group of methionyl-tRNA(fMet). The formyl group appears to play a dual role in the initiator identity of N-formylmethionyl-tRNA by promoting its recognition by IF2 and preventing the misappropriation of this tRNA by the elongation apparatus. The polypeptide is Methionyl-tRNA formyltransferase (Francisella tularensis subsp. holarctica (strain FTNF002-00 / FTA)).